We begin with the raw amino-acid sequence, 731 residues long: Catalase-peroxidase (731 aa).

The segment at 1–23 (MSDLKCPFSGHTGAVTPAGNTNN) is disordered. Residues 95–218 (WHSAGTYRTG…LAAVEMGLIY (124 aa)) constitute a cross-link (tryptophyl-tyrosyl-methioninium (Trp-Tyr) (with M-244)). His96 acts as the Proton acceptor in catalysis. Positions 218–244 (YVNPEGPHGEPDPVASGRDVRETFARM) form a cross-link, tryptophyl-tyrosyl-methioninium (Tyr-Met) (with W-95). Residue His259 coordinates heme b.

The protein belongs to the peroxidase family. Peroxidase/catalase subfamily. Homodimer or homotetramer. Heme b is required as a cofactor. Post-translationally, formation of the three residue Trp-Tyr-Met cross-link is important for the catalase, but not the peroxidase activity of the enzyme.

It catalyses the reaction H2O2 + AH2 = A + 2 H2O. The enzyme catalyses 2 H2O2 = O2 + 2 H2O. Functionally, bifunctional enzyme with both catalase and broad-spectrum peroxidase activity. This is Catalase-peroxidase from Synechococcus sp. (strain WH7803).